A 102-amino-acid polypeptide reads, in one-letter code: Large ribosomal subunit protein bL21 (102 aa).

This sequence belongs to the bacterial ribosomal protein bL21 family. Part of the 50S ribosomal subunit. Contacts protein L20.

Functionally, this protein binds to 23S rRNA in the presence of protein L20. In Bacillus anthracis (strain A0248), this protein is Large ribosomal subunit protein bL21.